A 486-amino-acid polypeptide reads, in one-letter code: Cardiolipin synthase A (486 aa).

The next 2 membrane-spanning stretches (helical) occupy residues 3 to 23 and 38 to 58; these read TFYTVISWLSVFGYWLLIAGV and MAWLLIIYILPLVGIIAYLSF. PLD phosphodiesterase domains are found at residues 219 to 246 and 399 to 426; these read MDLRQHRKIVLIDNYVAYTGSMNMVDPR and EGGLLHSKSVLVDGQLSLVGTVNLDMRS. Residues His-224, Lys-226, Asp-231, His-404, Lys-406, and Asp-411 contribute to the active site.

This sequence belongs to the phospholipase D family. Cardiolipin synthase subfamily. ClsA sub-subfamily.

Its subcellular location is the cell inner membrane. The enzyme catalyses 2 a 1,2-diacyl-sn-glycero-3-phospho-(1'-sn-glycerol) = a cardiolipin + glycerol. In terms of biological role, catalyzes the reversible phosphatidyl group transfer from one phosphatidylglycerol molecule to another to form cardiolipin (CL) (diphosphatidylglycerol) and glycerol. The protein is Cardiolipin synthase A of Yersinia pseudotuberculosis serotype O:3 (strain YPIII).